A 595-amino-acid polypeptide reads, in one-letter code: Probable Xaa-Pro aminopeptidase CHGG_02942 (595 aa).

The segment at 51 to 76 (KSGPSSSNLSPSTLSTEKTSSDSSGV) is disordered. Positions 52–66 (SGPSSSNLSPSTLST) are enriched in low complexity. 4 residues coordinate Mn(2+): D334, D345, E541, and E563.

The protein belongs to the peptidase M24B family. It depends on Mn(2+) as a cofactor.

It carries out the reaction Release of any N-terminal amino acid, including proline, that is linked to proline, even from a dipeptide or tripeptide.. In terms of biological role, catalyzes the removal of a penultimate prolyl residue from the N-termini of peptides. The protein is Probable Xaa-Pro aminopeptidase CHGG_02942 of Chaetomium globosum (strain ATCC 6205 / CBS 148.51 / DSM 1962 / NBRC 6347 / NRRL 1970) (Soil fungus).